A 485-amino-acid polypeptide reads, in one-letter code: Zinc finger protein 639 (485 aa).

Residues 1–14 (MNEYPKKRKRKTLH) are compositionally biased toward basic residues. The disordered stretch occupies residues 1–20 (MNEYPKKRKRKTLHPSRYSD). S60 bears the Phosphoserine mark. K76 is covalently cross-linked (Glycyl lysine isopeptide (Lys-Gly) (interchain with G-Cter in SUMO2)). S88 is modified (phosphoserine). Residues K177, K181, and K226 each participate in a glycyl lysine isopeptide (Lys-Gly) (interchain with G-Cter in SUMO2) cross-link. 8 consecutive C2H2-type zinc fingers follow at residues 204-227 (YKCE…ILKH), 233-255 (NVCR…AKLH), 260-283 (YICK…ADTH), 289-311 (YWCE…FQEH), 374-397 (FVCQ…AIEH), 403-425 (HVCD…LNSH), 431-454 (YLCQ…DFKH), and 460-482 (HKCS…LPVH). The segment at 371-455 (KNFFVCQVCG…LKIHLDFKHS (85 aa)) is interaction with CTNNA2.

It belongs to the krueppel C2H2-type zinc-finger protein family. As to quaternary structure, interacts with CTNNA2.

The protein localises to the nucleus. Functionally, binds DNA and may function as a transcriptional repressor. This is Zinc finger protein 639 (ZNF639) from Homo sapiens (Human).